Consider the following 177-residue polypeptide: Coatomer subunit zeta-3 (177 aa).

Belongs to the adaptor complexes small subunit family. In terms of assembly, oligomeric complex that consists of at least the alpha, beta, beta', gamma, delta, epsilon and zeta subunits.

The protein resides in the cytoplasm. It is found in the golgi apparatus membrane. The protein localises to the cytoplasmic vesicle. It localises to the COPI-coated vesicle membrane. Functionally, the coatomer is a cytosolic protein complex that binds to dilysine motifs and reversibly associates with Golgi non-clathrin-coated vesicles, which further mediate biosynthetic protein transport from the ER, via the Golgi up to the trans Golgi network. Coatomer complex is required for budding from Golgi membranes, and is essential for the retrograde Golgi-to-ER transport of dilysine-tagged proteins. The zeta subunit may be involved in regulating the coat assembly and, hence, the rate of biosynthetic protein transport due to its association-dissociation properties with the coatomer complex. The polypeptide is Coatomer subunit zeta-3 (Oryza sativa subsp. japonica (Rice)).